Reading from the N-terminus, the 313-residue chain is D-alanine--D-alanine ligase (313 aa).

In terms of domain architecture, ATP-grasp spans 108-308 (KLVWQQTGVP…YSELVVKVLS (201 aa)). 138-193 (VAKLGLPLFVKPASEGSSVAVLKVKTADALPAALAEAATHDKIVIVEKSIEGGGEY) provides a ligand contact to ATP. The Mg(2+) site is built by Asp-262, Glu-275, and Asn-277.

This sequence belongs to the D-alanine--D-alanine ligase family. It depends on Mg(2+) as a cofactor. Requires Mn(2+) as cofactor.

Its subcellular location is the cytoplasm. It carries out the reaction 2 D-alanine + ATP = D-alanyl-D-alanine + ADP + phosphate + H(+). It participates in cell wall biogenesis; peptidoglycan biosynthesis. In terms of biological role, cell wall formation. This Burkholderia orbicola (strain MC0-3) protein is D-alanine--D-alanine ligase.